A 285-amino-acid polypeptide reads, in one-letter code: 4-diphosphocytidyl-2-C-methyl-D-erythritol kinase (285 aa).

The active site involves lysine 12. Proline 95 to serine 105 is a binding site for ATP. Aspartate 137 is a catalytic residue.

Belongs to the GHMP kinase family. IspE subfamily.

It carries out the reaction 4-CDP-2-C-methyl-D-erythritol + ATP = 4-CDP-2-C-methyl-D-erythritol 2-phosphate + ADP + H(+). It participates in isoprenoid biosynthesis; isopentenyl diphosphate biosynthesis via DXP pathway; isopentenyl diphosphate from 1-deoxy-D-xylulose 5-phosphate: step 3/6. Catalyzes the phosphorylation of the position 2 hydroxy group of 4-diphosphocytidyl-2C-methyl-D-erythritol. The sequence is that of 4-diphosphocytidyl-2-C-methyl-D-erythritol kinase from Actinobacillus pleuropneumoniae serotype 3 (strain JL03).